Here is a 1237-residue protein sequence, read N- to C-terminus: Glutamate receptor ionotropic, NMDA 2C (1237 aa).

Positions 1–19 (MGGALGPALLLTSLLGAWA) are cleaved as a signal peptide. The Extracellular segment spans residues 20 to 554 (RLGAGQGEQA…SAFLEPYSPA (535 aa)). 2 N-linked (GlcNAc...) asparagine glycosylation sites follow: N70 and N73. An intrachain disulfide couples C82 to C317. Residues N337 and N438 are each glycosylated (N-linked (GlcNAc...) asparagine). Cystine bridges form between C426/C453 and C433/C454. L-glutamate-binding residues include S509, T511, and R516. A glycan (N-linked (GlcNAc...) asparagine) is linked at N539. The chain crosses the membrane as a helical span at residues 555–575 (VWVMMFVMCLTVVAITVFMFE). The Cytoplasmic portion of the chain corresponds to 576–601 (YFSPVSYNQNLTKGKKPGGPSFTIGK). The tract at residues 601 to 620 (KSVWLLWALVFNNSVPIENP) is pore-forming. Positions 602 to 611 (SVWLLWALVF) form an intramembrane region, discontinuously helical. At 612–622 (NNSVPIENPRG) the chain is on the cytoplasmic side. Residues 623–644 (TTSKIMVLVWAFFAVIFLASYT) traverse the membrane as a helical segment. Over 645–813 (ANLAAFMIQE…EVMSSKLDID (169 aa)) the chain is Extracellular. N685 carries an N-linked (GlcNAc...) asparagine glycan. L-glutamate-binding residues include S687, T688, and D729. Cysteines 743 and 798 form a disulfide. Residues 814-833 (NMAGVFYMLLVAMGLALLVF) traverse the membrane as a helical segment. Over 834-1237 (AWEHLVYWKL…RRVSSLESEV (404 aa)) the chain is Cytoplasmic. Residues S875, S881, and S912 each carry the phosphoserine modification. Residues 907–925 (ADVSSSLDRATRTIENWGN) show a composition bias toward polar residues. Residues 907-990 (ADVSSSLDRA…LPDVSRPSCR (84 aa)) form a disordered region. The segment covering 930 to 941 (PAPTASGPRSST) has biased composition (low complexity). The span at 968–982 (PQPPARPATCGPPLP) shows a compositional bias: pro residues. The PDZ-binding motif lies at 1235 to 1237 (SEV).

It belongs to the glutamate-gated ion channel (TC 1.A.10.1) family. NR2C/GRIN2C subfamily. Heterotetramer. Forms heterotetrameric channels composed of two GluN1/zeta subunits (GRIN1), and two identical GluN2/epsilon subunits (GRIN2A, GRIN2B, GRIN2C or GRIN2D) or GluN3 subunits (GRIN3A or GRIN3B) (in vitro). In vivo, the subunit composition may depend on the expression levels of the different subunits. Interacts with PDZ domains of PATJ and DLG4. Interacts (via PDZ-binding motif) with SNX27 (via PDZ domain); the interaction is required for recycling to the plasma membrane when endocytosed and prevent degradation in lysosomes. As to expression, detected in cerebellum.

It is found in the cell membrane. The protein resides in the postsynaptic cell membrane. It catalyses the reaction Ca(2+)(in) = Ca(2+)(out). The enzyme catalyses Na(+)(in) = Na(+)(out). It carries out the reaction K(+)(in) = K(+)(out). Functionally, component of N-methyl-D-aspartate (NMDA) receptors (NMDARs) that function as heterotetrameric, ligand-gated cation channels with high calcium permeability and voltage-dependent block by Mg(2+). Participates in synaptic plasticity for learning and memory formation by contributing to the slow phase of excitatory postsynaptic current and long-term synaptic potentiation. Channel activation requires binding of the neurotransmitter L-glutamate to the GluN2 subunit, glycine or D-serine binding to the GluN1 subunit, plus membrane depolarization to eliminate channel inhibition by Mg(2+). NMDARs mediate simultaneously the potasium efflux and the influx of calcium and sodium. Each GluN2 subunit confers differential attributes to channel properties, including activation, deactivation and desensitization kinetics, pH sensitivity, Ca2(+) permeability, and binding to allosteric modulators. The protein is Glutamate receptor ionotropic, NMDA 2C of Rattus norvegicus (Rat).